Consider the following 129-residue polypeptide: Histone H2A-III (129 aa).

The interval 1–22 (MSGRGKQGGKARAKAKSRSSRA) is disordered. Position 2 is an N-acetylserine (S2). Residue S2 is modified to Phosphoserine. Position 6 is an N6-(2-hydroxyisobutyryl)lysine (K6). An N6-acetyllysine mark is found at K6 and K10. The span at 7–19 (QGGKARAKAKSRS) shows a compositional bias: basic residues. K10 is modified (N6-(2-hydroxyisobutyryl)lysine; alternate). K10 is subject to N6-lactoyllysine; alternate. K10 is modified (N6-succinyllysine). Residues K14 and K16 each participate in a glycyl lysine isopeptide (Lys-Gly) (interchain with G-Cter in ubiquitin) cross-link. Residue K37 is modified to N6-(2-hydroxyisobutyryl)lysine; alternate. An N6-(2-hydroxyisobutyryl)lysine mark is found at K75 and K76. An N6-(2-hydroxyisobutyryl)lysine; alternate modification is found at K96. The residue at position 96 (K96) is an N6-succinyllysine. K96 is modified (N6-glutaryllysine; alternate). K100 carries the N6-glutaryllysine modification. Q105 carries the N5-methylglutamine modification. The residue at position 119 (K119) is an N6-(2-hydroxyisobutyryl)lysine; alternate. An N6-glutaryllysine; alternate mark is found at K119 and K120. Residue K120 forms a Glycyl lysine isopeptide (Lys-Gly) (interchain with G-Cter in ubiquitin) linkage.

It belongs to the histone H2A family. The nucleosome is a histone octamer containing two molecules each of H2A, H2B, H3 and H4 assembled in one H3-H4 heterotetramer and two H2A-H2B heterodimers. The octamer wraps approximately 147 bp of DNA. Monoubiquitination of Lys-120 (H2AK119Ub) gives a specific tag for epigenetic transcriptional repression. Following DNA double-strand breaks (DSBs), it is ubiquitinated through 'Lys-63' linkage of ubiquitin moieties, leading to the recruitment of repair proteins to sites of DNA damage. H2AK119Ub and ionizing radiation-induced 'Lys-63'-linked ubiquitination are distinct events. Post-translationally, phosphorylation on Ser-2 is enhanced during mitosis. Phosphorylation on Ser-2 directly represses transcription. In terms of processing, glutamine methylation at Gln-105 (H2AQ104me) by FBL is specifically dedicated to polymerase I. It is present at 35S ribosomal DNA locus and impairs binding of the FACT complex.

It is found in the nucleus. The protein localises to the chromosome. In terms of biological role, core component of nucleosome. Nucleosomes wrap and compact DNA into chromatin, limiting DNA accessibility to the cellular machineries which require DNA as a template. Histones thereby play a central role in transcription regulation, DNA repair, DNA replication and chromosomal stability. DNA accessibility is regulated via a complex set of post-translational modifications of histones, also called histone code, and nucleosome remodeling. The sequence is that of Histone H2A-III from Gallus gallus (Chicken).